The sequence spans 1855 residues: MAASELYTKFARVWIPDPEEVWKSAELLKDYKPGDKVLLLHLEEGKDLEYHLDPKTKELPHLRNPDILVGENDLTALSYLHEPAVLHNLRVRFIDSKLIYTYCGIVLVAINPYEQLPIYGEDIINAYSGQNMGDMDPHIFAVAEEAYKQMARDERNQSIIVSGESGAGKTVSAKYAMRYFATVSGSASEANVEEKVLASNPIMESIGNAKTTRNDNSSRFGKYIEIGFDKRYRIIGANMRTYLLEKSRVVFQAEEERNYHIFYQLCASAKLPEFKMLRLGNADNFNYTKQGGSPVIEGVDDAKEMAHTRQACTLLGISESHQMGIFRILAGILHLGNVGFTSRDADSCTIPPKHEPLCIFCELMGVDYEEMCHWLCHRKLATATETYIKPISKLQATNARDALAKHIYAKLFNWIVDNVNQALHSAVKQHSFIGVLDIYGFETFEINSFEQFCINYANEKLQQQFNMHVFKLEQEEYMKEQIPWTLIDFYDNQPCINLIESKLGILDLLDEECKMPKGTDDTWAQKLYNTHLNKCALFEKPRLSNKAFIIQHFADKVEYQCEGFLEKNKDTVFEEQIKVLKSSKFKMLPELFQDDEKAISPTSATSSGRTPLTRTPAKPTKGRPGQMAKEHKKTVGHQFRNSLHLLMETLNATTPHYVRCIKPNDFKFPFTFDEKRAVQQLRACGVLETIRISAAGFPSRWTYQEFFSRYRVLMKQKDVLSDRKQTCKNVLEKLILDKDKYQFGKTKIFFRAGQVAYLEKLRADKLRAACIRIQKTIRGWLLRKKYLRMRKAAITMQRYVRGYQARCYAKFLRRTKAATIIQKYWRMYVVRRRYKIRRAATIVLQSYLRGFLARNRYRKILREHKAVIIQKRVRGWLARTHYKRSMHAIIYLQCCFRRMMAKRELKKLKIEARSVERYKKLHIGMENKIMQLQRKVDEQNKDYKCLVEKLTNLEGIYNSETEKLRSDLERLQLSEEEAKVATGRVLSLQEEIAKLRKDLEQTRSEKKCIEEHADRYKQETEQLVSNLKEENTLLKQEKEALNHRIVQQAKEMTETMEKKLVEETKQLELDLNDERLRYQNLLNEFSRLEERYDDLKEEMTLMVHVPKPGHKRTDSTHSSNESEYIFSSEIAEMEDIPSRTEEPSEKKVPLDMSLFLKLQKRVTELEQEKQVMQDELDRKEEQVLRSKAKEEERPQIRGAELEYESLKRQELESENKKLKNELNELRKALSEKSAPEVTAPGAPAYRVLMEQLTSVSEELDVRKEEVLILRSQLVSQKEAIQPKDDKNTMTDSTILLEDVQKMKDKGEIAQAYIGLKETNRSSALDYHELNEDGELWLVYEGLKQANRLLESQLQSQKRSHENEAEALRGEIQSLKEENNRQQQLLAQNLQLPPEARIEASLQHEITRLTNENLDLMEQLEKQDKTVRKLKKQLKVFAKKIGELEVGQMENISPGQIIDEPIRPVNIPRKEKDFQGMLEYKKEDEQKLVKNLILELKPRGVAVNLIPGLPAYILFMCVRHADYLNDDQKVRSLLTSTINSIKKVLKKRGDDFETVSFWLSNTCRFLHCLKQYSGEEGFMKHNTSRQNEHCLTNFDLAEYRQVLSDLAIQIYQQLVRVLENILQPMIVSGMLEHETIQGVSGVKPTGLRKRTSSIADEGTYTLDSILRQLNSFHSVMCQHGMDPELIKQVVKQMFYIIGAITLNNLLLRKDMCSWSKGMQIRYNVSQLEEWLRDKNLMNSGAKETLEPLIQAAQLLQVKKKTDDDAEAICSMCNALTTAQIVKVLNLYTPVNEFEERVSVSFIRTIQMRLRDRKDSPQLLMDAKHIFPVTFPFNPSSLALETIQIPASLGLGFISRV.

A2 is modified (N-acetylalanine). Positions 8–60 constitute a Myosin N-terminal SH3-like domain; that stretch reads TKFARVWIPDPEEVWKSAELLKDYKPGDKVLLLHLEEGKDLEYHLDPKTKELP. A Myosin motor domain is found at 69-763; sequence VGENDLTALS…QVAYLEKLRA (695 aa). 163 to 170 contacts ATP; the sequence is GESGAGKT. Residues 598–631 form a disordered region; it reads AISPTSATSSGRTPLTRTPAKPTKGRPGQMAKEH. S600 is modified (phosphoserine). The span at 600-613 shows a compositional bias: polar residues; sequence SPTSATSSGRTPLT. The interval 643 to 665 is actin-binding; it reads LHLLMETLNATTPHYVRCIKPND. 6 consecutive IQ domains span residues 766–788, 789–818, 814–836, 837–861, 862–883, and 885–914; these read LRAACIRIQKTIRGWLLRKKYLR, MRKAAITMQRYVRGYQARCYAKFLRRTKAA, RTKAATIIQKYWRMYVVRRRYKI, RRAATIVLQSYLRGFLARNRYRKIL, REHKAVIIQKRVRGWLARTHYK, and SMHAIIYLQCCFRRMMAKRELKKLKIEARS. Coiled coils occupy residues 914-1237 and 1338-1445; these read SVER…APEV and VYEG…ELEV. T1032 bears the Phosphothreonine mark. A phosphoserine mark is found at S1452 and S1652. Positions 1534–1810 constitute a Dilute domain; it reads TSTINSIKKV…IRTIQMRLRD (277 aa). T1760 carries the phosphothreonine modification.

Belongs to the TRAFAC class myosin-kinesin ATPase superfamily. Myosin family. May be a homodimer, which associates with multiple calmodulin or myosin light chains. Interacts with RIPL2, the interaction is required for its role in dendrite formation. Interacts with MLPH. Interacts with SYTL4. Interacts with MYRIP. Interacts with RAB10; mediates the transport to the plasma membrane of SLC2A4/GLUT4 storage vesicles. Interacts with FMR1; this interaction occurs in association with polyribosome. In terms of tissue distribution, detected in melanocytes.

It carries out the reaction ATP + H2O = ADP + phosphate + H(+). Functionally, processive actin-based motor that can move in large steps approximating the 36-nm pseudo-repeat of the actin filament. Can hydrolyze ATP in the presence of actin, which is essential for its function as a motor protein. Involved in melanosome transport. Also mediates the transport of vesicles to the plasma membrane. May also be required for some polarization process involved in dendrite formation. This is Unconventional myosin-Va (MYO5A) from Homo sapiens (Human).